The sequence spans 292 residues: Ribosomal RNA small subunit methyltransferase A (292 aa).

The S-adenosyl-L-methionine site is built by asparagine 28, leucine 30, glycine 55, glutamate 76, aspartate 101, and asparagine 126.

This sequence belongs to the class I-like SAM-binding methyltransferase superfamily. rRNA adenine N(6)-methyltransferase family. RsmA subfamily.

Its subcellular location is the cytoplasm. The catalysed reaction is adenosine(1518)/adenosine(1519) in 16S rRNA + 4 S-adenosyl-L-methionine = N(6)-dimethyladenosine(1518)/N(6)-dimethyladenosine(1519) in 16S rRNA + 4 S-adenosyl-L-homocysteine + 4 H(+). Specifically dimethylates two adjacent adenosines (A1518 and A1519) in the loop of a conserved hairpin near the 3'-end of 16S rRNA in the 30S particle. May play a critical role in biogenesis of 30S subunits. In Bacillus anthracis, this protein is Ribosomal RNA small subunit methyltransferase A.